Here is a 477-residue protein sequence, read N- to C-terminus: ATP synthase subunit beta, chloroplastic (477 aa).

156 to 163 (GGAGVGKT) provides a ligand contact to ATP.

This sequence belongs to the ATPase alpha/beta chains family. In terms of assembly, F-type ATPases have 2 components, CF(1) - the catalytic core - and CF(0) - the membrane proton channel. CF(1) has five subunits: alpha(3), beta(3), gamma(1), delta(1), epsilon(1). CF(0) has four main subunits: a(1), b(1), b'(1) and c(9-12).

Its subcellular location is the plastid. The protein resides in the chloroplast thylakoid membrane. It catalyses the reaction ATP + H2O + 4 H(+)(in) = ADP + phosphate + 5 H(+)(out). In terms of biological role, produces ATP from ADP in the presence of a proton gradient across the membrane. The catalytic sites are hosted primarily by the beta subunits. The polypeptide is ATP synthase subunit beta, chloroplastic (Bigelowiella natans (Pedinomonas minutissima)).